Reading from the N-terminus, the 72-residue chain is Cell division protein ZapB (72 aa).

The stretch at 5 to 71 (ILDQLEEKIK…LRSLLGQIDN (67 aa)) forms a coiled coil.

This sequence belongs to the ZapB family. As to quaternary structure, homodimer. The ends of the coiled-coil dimer bind to each other, forming polymers. Interacts with FtsZ.

The protein resides in the cytoplasm. In terms of biological role, non-essential, abundant cell division factor that is required for proper Z-ring formation. It is recruited early to the divisome by direct interaction with FtsZ, stimulating Z-ring assembly and thereby promoting cell division earlier in the cell cycle. Its recruitment to the Z-ring requires functional FtsA or ZipA. This Actinobacillus pleuropneumoniae serotype 5b (strain L20) protein is Cell division protein ZapB.